Consider the following 396-residue polypeptide: Elongation factor Tu (396 aa).

The tr-type G domain maps to 10–205 (KPHVNIGTIG…AVDESIPDPV (196 aa)). Positions 19-26 (GHVDHGKT) are G1. GTP is bound at residue 19–26 (GHVDHGKT). Threonine 26 serves as a coordination point for Mg(2+). A G2 region spans residues 62–66 (GITIN). The segment at 83–86 (DAPG) is G3. GTP is bound by residues 83-87 (DAPGH) and 138-141 (NKAD). A G4 region spans residues 138-141 (NKAD). Residues 175 to 177 (SAL) form a G5 region.

The protein belongs to the TRAFAC class translation factor GTPase superfamily. Classic translation factor GTPase family. EF-Tu/EF-1A subfamily. In terms of assembly, monomer.

It localises to the cytoplasm. It carries out the reaction GTP + H2O = GDP + phosphate + H(+). Its function is as follows. GTP hydrolase that promotes the GTP-dependent binding of aminoacyl-tRNA to the A-site of ribosomes during protein biosynthesis. In Mycolicibacterium vanbaalenii (strain DSM 7251 / JCM 13017 / BCRC 16820 / KCTC 9966 / NRRL B-24157 / PYR-1) (Mycobacterium vanbaalenii), this protein is Elongation factor Tu.